Reading from the N-terminus, the 197-residue chain is Prefoldin subunit 3 (197 aa).

The tract at residues 1–26 is disordered; it reads MASLALRGSSENPAPTKDTTTNPRGI. Over residues 9–23 the composition is skewed to polar residues; that stretch reads SSENPAPTKDTTTNP.

The protein belongs to the prefoldin subunit alpha family. In terms of assembly, heterohexamer of two PFD-alpha type and four PFD-beta type subunits.

Prefoldin subunit; part of the gene cluster that mediates the biosynthesis of elsinochromes, pigments consisting of at least four interconvertible tautomers (A, B, C and D) that have a core phenolic quinone to which various side chains are attached and which play an important role in fungal pathogenesis. The non-reducing polyketide synthase PKS1 was proposed to iteratively catalyze decarboxylation between acetyl-CoA and malonyl-CoA subunits for polyketide chain elongation. The released polyketide undergoes cyclization to form an aromatic ring, and proceeds via serial modification steps to produce the heptaketide back- bone of elsinochrome. As elsinochrome has a symmetrical structure, two identical heptaketides are fused to form a core 1,2-dihydrobenzo-perylene ring structure, which can then be successively modified to produce the various derivatives of elsinochrome. Some of these reactions may be cooperatively carried out, at least in part, by the products of RDT1, OXR1 and PKS1. PRF1, embedded within the elsinochrome cluster possibly functions to stabilize some of the biosynthetic enzymes required for elsinochrome production. As prefoldin is a hexamer containing 2 a and 4 b subunits, additional prefoldin subunits, whose coding genes may not immediately link to the elsinochrome biosynthetic gene cluster, are required to fulfill the chaperone function. In addition, no methyltransferase-coding gene exists within the biosynthetic gene cluster, even though elsinochrome has four methyl groups at positions C3, C7, C8 and C12. Apparently, the identified gene cluster does not contain the entire entourage of genes responsible for elsinochrome biosynthesis. Once elsinochrome is synthesized, it must be exported outside the fungal cells, which is probably accomplished by the ECT1 transporter, to avoid toxicity. The chain is Prefoldin subunit 3 from Elsinoe fawcettii (Citrus scab fungus).